Here is a 144-residue protein sequence, read N- to C-terminus: 3-hydroxyacyl-[acyl-carrier-protein] dehydratase FabZ (144 aa).

His48 is a catalytic residue.

The protein belongs to the thioester dehydratase family. FabZ subfamily.

It is found in the cytoplasm. It carries out the reaction a (3R)-hydroxyacyl-[ACP] = a (2E)-enoyl-[ACP] + H2O. In terms of biological role, involved in unsaturated fatty acids biosynthesis. Catalyzes the dehydration of short chain beta-hydroxyacyl-ACPs and long chain saturated and unsaturated beta-hydroxyacyl-ACPs. The chain is 3-hydroxyacyl-[acyl-carrier-protein] dehydratase FabZ from Chloroflexus aggregans (strain MD-66 / DSM 9485).